A 362-amino-acid polypeptide reads, in one-letter code: Ribosome-binding ATPase YchF (362 aa).

The region spanning 3-255 is the OBG-type G domain; it reads FKCGIIGLPN…MNEDEQKYFM (253 aa). Residue 12 to 17 coordinates ATP; the sequence is NVGKST. 2 residues coordinate Mg(2+): serine 16 and threonine 36. Positions 277-360 constitute a TGS domain; it reads NLITFFTAGI…QDGDIINFLF (84 aa).

This sequence belongs to the TRAFAC class OBG-HflX-like GTPase superfamily. OBG GTPase family. YchF/OLA1 subfamily. The cofactor is Mg(2+).

Functionally, ATPase that binds to both the 70S ribosome and the 50S ribosomal subunit in a nucleotide-independent manner. This Buchnera aphidicola subsp. Schizaphis graminum (strain Sg) protein is Ribosome-binding ATPase YchF.